The chain runs to 63 residues: Conotoxin Gm5.1 (63 aa).

Residues 1–21 form the signal peptide; the sequence is MRYLPVFVILLLLIASIPSDT. Residues 22-50 constitute a propeptide that is removed on maturation; that stretch reads VQLKTKDDMPLASFHGNGRRILRMLSNKR.

The protein belongs to the conotoxin T superfamily. Post-translationally, contains 2 disulfide bonds that can be either 'C1-C3, C2-C4' or 'C1-C4, C2-C3', since these disulfide connectivities have been observed for conotoxins with cysteine framework V (for examples, see AC P0DQQ7 and AC P81755). Expressed by the venom duct.

The protein resides in the secreted. This is Conotoxin Gm5.1 from Conus gloriamaris (Glory-of-the-Sea cone).